The following is a 78-amino-acid chain: Putative antitoxin VapB4 (78 aa).

It belongs to the UPF0330 family.

In terms of biological role, possibly the antitoxin component of a type II toxin-antitoxin (TA) system. Its cognate toxin is VapC4 (Potential). The polypeptide is Putative antitoxin VapB4 (vapB4) (Pyrococcus furiosus (strain ATCC 43587 / DSM 3638 / JCM 8422 / Vc1)).